The chain runs to 91 residues: Potassium channel toxin MeuTXK-beta-2 (91 aa).

A signal peptide spans 1 to 19 (MQRNLVVLLFLGMVALSSC). The BetaSPN-type CS-alpha/beta domain occupies 54–91 (QFGCSAYQGYCDDHCQDIEKKEGFCHGFKCKCGIPMGF). 3 disulfide bridges follow: cysteine 57–cysteine 78, cysteine 64–cysteine 83, and cysteine 68–cysteine 85.

Belongs to the long chain scorpion toxin family. Class 1 subfamily. In terms of tissue distribution, expressed by the venom gland.

It is found in the secreted. Functionally, has a low affinity binding to potassium channels of rat brain synaptosomes. Displays weak antibacterial activity against Stenotrophomonas sp. Strongly inhibits the development of the Plasmodium berghei ookinetes. Displays slight hemolytic effect on mouse erythrocytes. Induces cytolysis on Xenopus oocytes at high concentrations. Is not toxic towards mice and towards the insect Tenebrio molitor. The protein is Potassium channel toxin MeuTXK-beta-2 of Mesobuthus eupeus (Lesser Asian scorpion).